The sequence spans 242 residues: Phosphate import ATP-binding protein PstB 1 (242 aa).

In terms of domain architecture, ABC transporter spans 1–237 (MDLYYGSYRA…PKDQRTEDYI (237 aa)). 28–35 (GPSGCGKS) is an ATP binding site.

The protein belongs to the ABC transporter superfamily. Phosphate importer (TC 3.A.1.7) family. In terms of assembly, the complex is composed of two ATP-binding proteins (PstB), two transmembrane proteins (PstC and PstA) and a solute-binding protein (PstS).

The protein localises to the cell membrane. The enzyme catalyses phosphate(out) + ATP + H2O = ADP + 2 phosphate(in) + H(+). Functionally, part of the ABC transporter complex PstSACB involved in phosphate import. Responsible for energy coupling to the transport system. This is Phosphate import ATP-binding protein PstB 1 from Symbiobacterium thermophilum (strain DSM 24528 / JCM 14929 / IAM 14863 / T).